A 435-amino-acid polypeptide reads, in one-letter code: Thiosulfate sulfurtransferase YnjE (435 aa).

A signal peptide spans 1-23 (MKRVSQMTALAMALGLACASSWA). Rhodanese domains lie at 36-138 (QQQN…RLQK), 164-270 (PAGD…PVER), and 304-425 (HRQD…NPVA). The active-site Cysteine persulfide intermediate is the C385. Position 390 (R390) interacts with substrate.

As to quaternary structure, monomer.

Its subcellular location is the periplasm. The catalysed reaction is thiosulfate + hydrogen cyanide = thiocyanate + sulfite + 2 H(+). This Escherichia coli (strain K12) protein is Thiosulfate sulfurtransferase YnjE (ynjE).